The primary structure comprises 291 residues: Probable plasmid-partitioning protein ParB (291 aa).

Belongs to the ParB family.

In Deinococcus radiodurans (strain ATCC 13939 / DSM 20539 / JCM 16871 / CCUG 27074 / LMG 4051 / NBRC 15346 / NCIMB 9279 / VKM B-1422 / R1), this protein is Probable plasmid-partitioning protein ParB.